The sequence spans 425 residues: Serine--tRNA ligase (425 aa).

230–232 (TAE) contacts L-serine. 261 to 263 (RSE) provides a ligand contact to ATP. An L-serine-binding site is contributed by Glu-284. An ATP-binding site is contributed by 348 to 351 (EISS). Position 384 (Ser-384) interacts with L-serine.

This sequence belongs to the class-II aminoacyl-tRNA synthetase family. Type-1 seryl-tRNA synthetase subfamily. Homodimer. The tRNA molecule binds across the dimer.

The protein localises to the cytoplasm. The enzyme catalyses tRNA(Ser) + L-serine + ATP = L-seryl-tRNA(Ser) + AMP + diphosphate + H(+). It carries out the reaction tRNA(Sec) + L-serine + ATP = L-seryl-tRNA(Sec) + AMP + diphosphate + H(+). It participates in aminoacyl-tRNA biosynthesis; selenocysteinyl-tRNA(Sec) biosynthesis; L-seryl-tRNA(Sec) from L-serine and tRNA(Sec): step 1/1. In terms of biological role, catalyzes the attachment of serine to tRNA(Ser). Is also able to aminoacylate tRNA(Sec) with serine, to form the misacylated tRNA L-seryl-tRNA(Sec), which will be further converted into selenocysteinyl-tRNA(Sec). This is Serine--tRNA ligase from Streptococcus pyogenes serotype M4 (strain MGAS10750).